A 527-amino-acid polypeptide reads, in one-letter code: N-acetylglucosamine-1-phosphodiester alpha-N-acetylglucosaminidase (527 aa).

Positions 1–25 (MASSMGRFLLFFIALRGFLLEASGD) are cleaved as a signal peptide. Residues 26-49 (FGSGASRDDDVLLPYSRARARLAR) constitute a propeptide, removed in mature form. The Lumenal segment spans residues 50–463 (DCTRVHAGRL…SLLTRTTWLA (414 aa)). Cystine bridges form between Cys-116-Cys-149, Cys-133-Cys-324, Cys-308-Cys-315, Cys-363-Cys-374, and Cys-381-Cys-390. 3 N-linked (GlcNAc...) asparagine glycosylation sites follow: Asn-209, Asn-215, and Asn-297. Residues 359–391 (DKLDCGPANCSQHGLCTETGCRCEAGWTGSNCS) enclose the EGF-like domain. N-linked (GlcNAc...) asparagine glycosylation is found at Asn-367, Asn-389, and Asn-421. A helical membrane pass occupies residues 464–484 (ITLALAFLLLISTAANVSLFL). Over 485–527 (GSRAARRRHLDGAYVYHPLQEVNGEHPAAEKEQLGDSSNPFKD) the chain is Cytoplasmic. The interval 498-505 (YVYHPLQE) is mediates the interaction with AP4M1. Residues 500 to 503 (YHPL) carry the Tyrosine-based internalization motif motif. The short motif at 523 to 527 (NPFKD) is the NPF internalization motif element.

In terms of assembly, homotetramer arranged as two disulfide-linked homodimers. Interacts with AP4M1. In terms of processing, glycosylated. Contains complex N-linked oligosaccharides with appreciable amounts of sialic acid. The precursor is cleaved and activated in the trans-Golgi network by a furin endopeptidase.

Its subcellular location is the golgi apparatus. The protein localises to the golgi stack membrane. The protein resides in the trans-Golgi network. The catalysed reaction is N(4)-[6-(N-acetyl-alpha-D-glucosaminyl-1-phospho)-alpha-D-mannosyl-(1-&gt;2)-alpha-D-mannosyl-(glycan)]-L-asparaginyl-[protein] + H2O = N(4)-[6-phospho-alpha-D-mannosyl-(1-&gt;2)-alpha-D-mannosyl-(glycan)]-L-asparaginyl-[protein] + N-acetyl-D-glucosamine + H(+). It functions in the pathway protein modification; protein glycosylation. Functionally, catalyzes the second step in the formation of the mannose 6-phosphate targeting signal on lysosomal enzyme oligosaccharides by removing GlcNAc residues from GlcNAc-alpha-P-mannose moieties, which are formed in the first step. Also hydrolyzes UDP-GlcNAc, a sugar donor for Golgi N-acetylglucosaminyltransferases. This is N-acetylglucosamine-1-phosphodiester alpha-N-acetylglucosaminidase (NAGPA) from Bos taurus (Bovine).